Reading from the N-terminus, the 1716-residue chain is Histone-lysine N-methyltransferase SETD1A (1716 aa).

The interval 60-89 is interaction with WDR82; it reads LQDPRCHVRSKARDFSLPVPKFKLDEFYIG. Residues 84–172 form the RRM domain; sequence DEFYIGQIPL…NIIHAQLDIK (89 aa). Disordered stretches follow at residues 194 to 367, 380 to 499, 516 to 670, 849 to 869, 911 to 1206, 1230 to 1259, and 1275 to 1297; these read PTGG…SSYP, TSYP…AQHS, FSFL…PPPH, AKPF…EKMK, KRKE…SRKV, EEVA…GTEV, and GLAT…AERP. Residues 222–231 are compositionally biased toward low complexity; the sequence is SDTAAYPAGT. The span at 243–277 shows a compositional bias: polar residues; the sequence is CSQDTNFSSSRQDTPSSFGQFTPQSSQGTPYTSRG. 2 stretches are compositionally biased toward low complexity: residues 278–295 and 315–357; these read STPY…TSTS and STSS…SSAS. Residues 430–440 show a composition bias toward pro residues; sequence SEAPPPEPPEP. The segment covering 441–461 has biased composition (gly residues); the sequence is GGGGGGSGGGGGGGGGGGGGA. The residue at position 477 (S477) is a Phosphoserine. Positions 477–487 are enriched in low complexity; the sequence is SPARSGSPAPE. Polar residues predominate over residues 488–499; the sequence is TTNESVPFAQHS. Residues S521 and S578 each carry the phosphoserine modification. Positions 581 to 591 are enriched in polar residues; the sequence is ANGQNQASPCS. Pro residues-rich tracts occupy residues 606 to 631 and 638 to 670; these read SPPP…PPPY and GYPP…PPPH. Residues 859–869 show a composition bias toward basic and acidic residues; it reads QAKEEDKEKMK. Phosphoserine is present on S930. Composition is skewed to acidic residues over residues 991–1009 and 1018–1027; these read KDED…EEAV and ASDGEDEDSD. Residues 1028–1071 are compositionally biased toward low complexity; the sequence is SSSQCSLYADSDGENGSTSDSESGSSSSSSSSSSSSSSSSSSES. S1110 bears the Phosphoserine mark. Pro residues predominate over residues 1130 to 1150; the sequence is EEPPPSVPQPPAEPPAGPPDA. The span at 1283–1292 shows a compositional bias: acidic residues; that stretch reads DDSEATETSD. The HCFC1-binding motif (HBM) signature appears at 1307–1311; sequence EHNYA. Disordered stretches follow at residues 1355–1427 and 1480–1508; these read EEPK…FEPR and TNLS…SEGY. A compositionally biased stretch (acidic residues) spans 1369-1383; it reads EGEEEEEDEEEESES. A compositionally biased stretch (basic residues) spans 1399–1412; it reads RRRSLRSHTRRRRP. The span at 1413-1424 shows a compositional bias: pro residues; sequence PLPPPPPPPPSF. The tract at residues 1424-1459 is interaction with CFP1; that stretch reads FEPRSEFEQMTILYDIWNSGLDLEDMSYLRLTYERL. An interaction with ASH2L, RBBP5 and WDR5 region spans residues 1459–1546; the sequence is LLQQTSGADW…GTNRVLSERR (88 aa). The WDR5 interaction motif (WIN) signature appears at 1501 to 1506; the sequence is GSARSE. Positions 1546-1551 match the RxxxRR motif motif; it reads RSEQRR. The 118-residue stretch at 1577–1694 folds into the SET domain; that stretch reads KKLRFGRSRI…VDEEITYDYK (118 aa). Position 1693 (Y1693) interacts with S-adenosyl-L-methionine. A Post-SET domain is found at 1700–1716; sequence NKIPCLCGTESCRGSLN.

It belongs to the class V-like SAM-binding methyltransferase superfamily. In terms of assembly, component of the SET1A/COMPASS complex composed of the catalytic subunit SETD1A, WDR5, WDR82, RBBP5, ASH2L/ASH2, CXXC1/CFP1, HCFC1 and DPY30 homotrimer. Forms a core complex with the evolutionary conserved subcomplex WRAD composed of WDR5, RBBP5, ASH2L/ASH2 and DPY30 subunits; WRAD differentially stimulates the methyltransferase activity. Interacts with BOD1L1 (via COMPASS-Shg1 domain) at replication forks. Interacts with HCFC1. Interacts with ASH2/ASH2L. Interacts with CXXC1/CFP1. Interacts with RBBP5. Interacts (via N-terminal region) with WDR82; the interaction is direct. Interacts (via the RRM domain) with hyperphosphorylated C-terminal domain (CTD) of RNA polymerase II large subunit (POLR2A) only in the presence of WDR82. Binds specifically to CTD heptad repeats phosphorylated on 'Ser-5' of each heptad. Interacts with ZNF335. Interacts with SUPT6H. Interacts with NAP1L1. Interacts (via WIN motif) with WDR5.

It is found in the nucleus. The protein resides in the nucleus speckle. It localises to the chromosome. The protein localises to the cytoplasm. The enzyme catalyses L-lysyl(4)-[histone H3] + S-adenosyl-L-methionine = N(6)-methyl-L-lysyl(4)-[histone H3] + S-adenosyl-L-homocysteine + H(+). It carries out the reaction N(6)-methyl-L-lysyl(4)-[histone H3] + S-adenosyl-L-methionine = N(6),N(6)-dimethyl-L-lysyl(4)-[histone H3] + S-adenosyl-L-homocysteine + H(+). The catalysed reaction is N(6),N(6)-dimethyl-L-lysyl(4)-[histone H3] + S-adenosyl-L-methionine = N(6),N(6),N(6)-trimethyl-L-lysyl(4)-[histone H3] + S-adenosyl-L-homocysteine + H(+). Functionally, histone methyltransferase that catalyzes methyl group transfer from S-adenosyl-L-methionine to the epsilon-amino group of 'Lys-4' of histone H3 (H3K4) via a non-processive mechanism. Part of chromatin remodeling machinery, forms H3K4me1, H3K4me2 and H3K4me3 methylation marks at active chromatin sites where transcription and DNA repair take place. Responsible for H3K4me3 enriched promoters and transcriptional programming of inner mass stem cells and neuron progenitors during embryogenesis. Required for H3K4me1 mark at stalled replication forks. Mediates FANCD2-dependent nucleosome remodeling and RAD51 nucleofilaments stabilization at reversed forks, protecting them from nucleolytic degradation. Does not methylate 'Lys-4' of histone H3 if the neighboring 'Lys-9' residue is already methylated. Has RNA binding activity towards transcripts involved in RNA processing and the DNA damage response. The chain is Histone-lysine N-methyltransferase SETD1A (Setd1a) from Mus musculus (Mouse).